An 830-amino-acid chain; its full sequence is Nucleolar complex-associated protein 3 (830 aa).

Disordered regions lie at residues 1–22, 67–86, 112–169, 391–436, and 802–830; these read MGKNRRKQKVIPPPLLPPDVAE, KYEEERSKRKTLQEEKGNGE, KSKL…EETP, GKPN…KIRD, and LQSEEKKPLKKQNNVVKKKLKNPKSKKQI. 2 coiled-coil regions span residues 61–81 and 111–156; these read VMTVEDKYEEERSKRKTLQEE and KKSK…HEKD. Residues 67-84 are compositionally biased toward basic and acidic residues; it reads KYEEERSKRKTLQEEKGN. A compositionally biased stretch (acidic residues) spans 118–129; that stretch reads AETDEAEKDVLE. A compositionally biased stretch (basic and acidic residues) spans 130–140; the sequence is DEHVLNKSQRR. Residues 138-145 carry the Nuclear localization signal 1 motif; it reads QRREKAKK. Residues 141-150 are compositionally biased toward basic residues; sequence EKAKKSKREA. The segment covering 159 to 168 has biased composition (acidic residues); it reads DEILQEEEET. The segment covering 391 to 400 has biased composition (basic and acidic residues); that stretch reads GKPNKEDEHN. A coiled-coil region spans residues 400–429; sequence NKKYKKNNKRKTQEEQNQVQENERKKSKKD. The Nuclear localization signal 2 motif lies at 408–415; it reads KRKTQEEQ. The span at 420–436 shows a compositional bias: basic and acidic residues; sequence ENERKKSKKDMMSKIRD. A Nuclear localization signal 3 motif is present at residues 806–813; the sequence is EKKPLKKQ. Residues 817–830 are compositionally biased toward basic residues; that stretch reads VKKKLKNPKSKKQI.

This sequence belongs to the CBF/MAK21 family. As to quaternary structure, component of nucleolar complexes. Interacts with RBL and NOC2 in both the nucleolus and nucleoplasm.

It is found in the nucleus. Its subcellular location is the nucleolus. It localises to the nucleoplasm. In terms of biological role, may be required for synthesis of 60S ribosomal subunits and the transport of pre-ribosomes from the nucleoplasm to the cytoplasm. Also required for initiation of DNA replication. The protein is Nucleolar complex-associated protein 3 of Arabidopsis thaliana (Mouse-ear cress).